The primary structure comprises 213 residues: 3-oxoadipate CoA-transferase subunit B (213 aa).

Glu50 is an active-site residue.

This sequence belongs to the 3-oxoacid CoA-transferase subunit B family. Heterodimer.

The enzyme catalyses 3-oxoadipate + succinyl-CoA = 3-oxoadipyl-CoA + succinate. It participates in aromatic compound metabolism; beta-ketoadipate pathway; acetyl-CoA and succinyl-CoA from 3-oxoadipate: step 1/2. This chain is 3-oxoadipate CoA-transferase subunit B (pcaJ), found in Pseudomonas putida (strain ATCC 47054 / DSM 6125 / CFBP 8728 / NCIMB 11950 / KT2440).